We begin with the raw amino-acid sequence, 446 residues long: Probable arogenate/prephenate dehydrogenase (446 aa).

The 283-residue stretch at 6–288 folds into the Prephenate/arogenate dehydrogenase domain; that stretch reads LTISIIGGTD…SEAKRGAYYS (283 aa).

The protein in the N-terminal section; belongs to the prephenate/arogenate dehydrogenase family.

This Methanocaldococcus jannaschii (strain ATCC 43067 / DSM 2661 / JAL-1 / JCM 10045 / NBRC 100440) (Methanococcus jannaschii) protein is Probable arogenate/prephenate dehydrogenase.